Reading from the N-terminus, the 288-residue chain is Beta-lactamase PSE-1 (288 aa).

A signal peptide spans 1 to 17; it reads MKFLLAFSLLIPSVVFA. S65 functions as the Acyl-ester intermediate in the catalytic mechanism. Cysteines 72 and 118 form a disulfide. 229-231 serves as a coordination point for substrate; sequence RSG.

The protein belongs to the class-A beta-lactamase family. In terms of assembly, monomer.

It catalyses the reaction a beta-lactam + H2O = a substituted beta-amino acid. Its activity is regulated as follows. Inhibited by p-chloromercuribenzoate but not by cloxacillin. Hydrolyzes penicillin, ampicillin and carbenicillin but not other antibiotics including oxacillin, methicillin and cloxacillin. This is Beta-lactamase PSE-1 from Pseudomonas aeruginosa.